Reading from the N-terminus, the 147-residue chain is Ribosomal RNA large subunit methyltransferase H (147 aa).

S-adenosyl-L-methionine is bound by residues Leu64, Gly96, and 115 to 120 (FSKMTF).

Belongs to the RNA methyltransferase RlmH family. As to quaternary structure, homodimer.

The protein localises to the cytoplasm. It catalyses the reaction pseudouridine(1915) in 23S rRNA + S-adenosyl-L-methionine = N(3)-methylpseudouridine(1915) in 23S rRNA + S-adenosyl-L-homocysteine + H(+). Functionally, specifically methylates the pseudouridine at position 1915 (m3Psi1915) in 23S rRNA. This Acholeplasma laidlawii (strain PG-8A) protein is Ribosomal RNA large subunit methyltransferase H.